The chain runs to 132 residues: Nucleoid-associated protein EspR (132 aa).

Residues 38–50 constitute a DNA-binding region (H-T-H motif); sequence ITMSAPYLSQLRS.

In terms of assembly, homodimer. Binds DNA as a dimer of dimers.

The protein resides in the cytoplasm. It is found in the nucleoid. Virulence regulator that has both architectural and regulatory roles. Impacts cell wall functions and pathogenesis through regulation of multiple genes. This is Nucleoid-associated protein EspR from Mycobacterium tuberculosis (strain CDC 1551 / Oshkosh).